The sequence spans 78 residues: Defensin SD2 (78 aa).

The N-terminal stretch at 1–20 is a signal peptide; it reads MKSSMKMFAALLLVVMCLLA. 4 cysteine pairs are disulfide-bonded: C34/C78, C45/C65, C51/C72, and C55/C74.

It belongs to the DEFL family. Highest expression in flowers and to a lesser extent in leaves. Lower levels in hypocotyls. No expression in roots and cotyledons.

It is found in the secreted. It localises to the cell wall. May play a protective role in flowers by protecting the reproductive organs from potential pathogen attack. The chain is Defensin SD2 (SD2) from Helianthus annuus (Common sunflower).